The sequence spans 337 residues: Major outer membrane protein P.IB (337 aa).

Positions 1–19 are cleaved as a signal peptide; sequence MKKSLIALTLAALPVAAMA.

It belongs to the Gram-negative porin family. Homotrimer.

Its subcellular location is the cell outer membrane. Serves as a slightly cation selective porin. The chain is Major outer membrane protein P.IB (por) from Neisseria lactamica.